Here is a 99-residue protein sequence, read N- to C-terminus: Transcriptional repressor PagR (99 aa).

An HTH arsR-type domain is found at 9–99 (IEYMSLEDDA…GIIKLLNPIQ (91 aa)). The H-T-H motif DNA-binding region spans 43–62 (NVTQIIQILKLPQSTVSQHL).

Functionally, represses the expression of the pagA and atxA genes. The chain is Transcriptional repressor PagR (pagR) from Bacillus anthracis.